A 214-amino-acid polypeptide reads, in one-letter code: GTP cyclohydrolase 1 (214 aa).

Zn(2+) contacts are provided by Cys108, His111, and Cys179.

The protein belongs to the GTP cyclohydrolase I family. In terms of assembly, toroid-shaped homodecamer, composed of two pentamers of five dimers.

It catalyses the reaction GTP + H2O = 7,8-dihydroneopterin 3'-triphosphate + formate + H(+). Its pathway is cofactor biosynthesis; 7,8-dihydroneopterin triphosphate biosynthesis; 7,8-dihydroneopterin triphosphate from GTP: step 1/1. This chain is GTP cyclohydrolase 1, found in Shewanella loihica (strain ATCC BAA-1088 / PV-4).